Reading from the N-terminus, the 392-residue chain is 8-amino-7-oxononanoate synthase (392 aa).

R21 serves as a coordination point for substrate. 114-115 (GY) is a pyridoxal 5'-phosphate binding site. H139 provides a ligand contact to substrate. Pyridoxal 5'-phosphate-binding positions include S187, 212–215 (DEAH), and 243–246 (TFGK). Residue K246 is modified to N6-(pyridoxal phosphate)lysine. Substrate is bound at residue T359.

Belongs to the class-II pyridoxal-phosphate-dependent aminotransferase family. BioF subfamily. Homodimer. It depends on pyridoxal 5'-phosphate as a cofactor.

The enzyme catalyses 6-carboxyhexanoyl-[ACP] + L-alanine + H(+) = (8S)-8-amino-7-oxononanoate + holo-[ACP] + CO2. The protein operates within cofactor biosynthesis; biotin biosynthesis. Catalyzes the decarboxylative condensation of pimeloyl-[acyl-carrier protein] and L-alanine to produce 8-amino-7-oxononanoate (AON), [acyl-carrier protein], and carbon dioxide. The polypeptide is 8-amino-7-oxononanoate synthase (Chlorobaculum parvum (strain DSM 263 / NCIMB 8327) (Chlorobium vibrioforme subsp. thiosulfatophilum)).